Reading from the N-terminus, the 251-residue chain is HTH-type transcriptional regulator UlaR (251 aa).

An HTH deoR-type domain is found at Glu3–Ala58. Positions Val20–Asp39 form a DNA-binding region, H-T-H motif.

The protein resides in the cytoplasm. Its function is as follows. Represses ulaG and the ulaABCDEF operon. The polypeptide is HTH-type transcriptional regulator UlaR (Salmonella arizonae (strain ATCC BAA-731 / CDC346-86 / RSK2980)).